We begin with the raw amino-acid sequence, 349 residues long: MSGKVAVLGAGSWATALSRLLSKKGCQVVMWSASSEQAREINETRENRHYLPGVMLPADIEVTLDLEKALYKAKAVVYGVPSHAFREVARRSLPYLPENAVLVNVAKGIEEESLYRMSQVFAEEAGLSMLDRYVVLSGPSHAEEVGRDIPTAVVVASPNMERAEQVQDLFMCESFRVYTNPDVVGVELGGALKNIIALGTGIADGLGFGDNTKAALMTRGLAEISRLGMVMGANPLTFAGLSGVGDLIVTCTSMHSRNRRAGMAIGQGKSLEEALSMVKMVVEGVRTTRAARRLSEKHAVQMPITEQIHRVLFEGLSPAVAVNKLMTRGKTHEMEEVALAAAMVGKIKL.

Positions 12, 13, and 107 each coordinate NADPH. Sn-glycerol 3-phosphate contacts are provided by K107, G138, and S140. Residue A142 coordinates NADPH. K193, D246, S256, R257, and N258 together coordinate sn-glycerol 3-phosphate. K193 (proton acceptor) is an active-site residue. R257 lines the NADPH pocket. NADPH-binding residues include V281 and E283.

This sequence belongs to the NAD-dependent glycerol-3-phosphate dehydrogenase family.

The protein localises to the cytoplasm. It carries out the reaction sn-glycerol 3-phosphate + NAD(+) = dihydroxyacetone phosphate + NADH + H(+). It catalyses the reaction sn-glycerol 3-phosphate + NADP(+) = dihydroxyacetone phosphate + NADPH + H(+). The protein operates within membrane lipid metabolism; glycerophospholipid metabolism. Catalyzes the reduction of the glycolytic intermediate dihydroxyacetone phosphate (DHAP) to sn-glycerol 3-phosphate (G3P), the key precursor for phospholipid synthesis. This is Glycerol-3-phosphate dehydrogenase [NAD(P)+] from Pelotomaculum thermopropionicum (strain DSM 13744 / JCM 10971 / SI).